A 533-amino-acid polypeptide reads, in one-letter code: Tryptophan N-monooxygenase CYP79A68 (533 aa).

A helical membrane pass occupies residues 12–32 (VTPPISLSLAFIIFMFLVKFI). Residue asparagine 209 is glycosylated (N-linked (GlcNAc...) asparagine). Residue cysteine 471 participates in heme binding.

This sequence belongs to the cytochrome P450 family. The cofactor is heme. As to expression, confined to buds.

It is found in the membrane. The catalysed reaction is L-tryptophan + 2 reduced [NADPH--hemoprotein reductase] + 2 O2 = (E)-(indol-3-yl)acetaldehyde oxime + 2 oxidized [NADPH--hemoprotein reductase] + CO2 + 3 H2O + 2 H(+). Functionally, catalyzes with low efficiency E and Z isomers of indole-3-acetaldoxime from tryptophan (Trp). The sequence is that of Tryptophan N-monooxygenase CYP79A68 from Prunus mume (Japanese apricot).